Consider the following 208-residue polypeptide: Ribosomal RNA large subunit methyltransferase E (208 aa).

Glycine 62, tryptophan 64, aspartate 82, aspartate 98, and aspartate 123 together coordinate S-adenosyl-L-methionine. Catalysis depends on lysine 163, which acts as the Proton acceptor.

This sequence belongs to the class I-like SAM-binding methyltransferase superfamily. RNA methyltransferase RlmE family.

It is found in the cytoplasm. The enzyme catalyses uridine(2552) in 23S rRNA + S-adenosyl-L-methionine = 2'-O-methyluridine(2552) in 23S rRNA + S-adenosyl-L-homocysteine + H(+). In terms of biological role, specifically methylates the uridine in position 2552 of 23S rRNA at the 2'-O position of the ribose in the fully assembled 50S ribosomal subunit. In Glaesserella parasuis serovar 5 (strain SH0165) (Haemophilus parasuis), this protein is Ribosomal RNA large subunit methyltransferase E.